Reading from the N-terminus, the 151-residue chain is Ribosomal RNA large subunit methyltransferase H (151 aa).

S-adenosyl-L-methionine is bound by residues Leu73, Gly100, and Leu119 to Met124.

It belongs to the RNA methyltransferase RlmH family. As to quaternary structure, homodimer.

The protein localises to the cytoplasm. The enzyme catalyses pseudouridine(1915) in 23S rRNA + S-adenosyl-L-methionine = N(3)-methylpseudouridine(1915) in 23S rRNA + S-adenosyl-L-homocysteine + H(+). In terms of biological role, specifically methylates the pseudouridine at position 1915 (m3Psi1915) in 23S rRNA. The chain is Ribosomal RNA large subunit methyltransferase H from Aliarcobacter butzleri (strain RM4018) (Arcobacter butzleri).